The chain runs to 350 residues: Olfactory receptor 52I2 (350 aa).

At 1–55 the chain is on the extracellular side; it reads MCQQILRDCILLIHHLCINRKKVSLVMLGPAYNHTMETPASFLLVGIPGLQSSHL. Asn-33 is a glycosylation site (N-linked (GlcNAc...) asparagine). Residues 56 to 76 traverse the membrane as a helical segment; that stretch reads WLAISLSAMYIIALLGNTIIV. The Cytoplasmic segment spans residues 77–84; the sequence is TAIWMDST. A helical transmembrane segment spans residues 85–105; that stretch reads RHEPMYCFLCVLAAVDIVMAS. At 106–129 the chain is on the extracellular side; that stretch reads SVVPKMVSIFCSGDSSISFSACFT. Cys-127 and Cys-219 form a disulfide bridge. Residues 130–150 form a helical membrane-spanning segment; that stretch reads QMFFVHLATAVETGLLLTMAF. The Cytoplasmic portion of the chain corresponds to 151 to 169; it reads DRYVAICKPLHYKRILTPQ. A helical transmembrane segment spans residues 170–190; it reads VMLGMSMAITIRAIIAITPLS. Topologically, residues 191 to 226 are extracellular; sequence WMVSHLPFCGSNVVVHSYCEHIALARLACADPVPSS. The chain crosses the membrane as a helical span at residues 227-247; the sequence is LYSLIGSSLMVGSDVAFIAAS. Topologically, residues 248–267 are cytoplasmic; the sequence is YILILKAVFGLSSKTAQLKA. A helical membrane pass occupies residues 268 to 288; it reads LSTCGSHVGVMALYYLPGMAS. At 289–304 the chain is on the extracellular side; it reads IYAAWLGQDVVPLHTQ. A helical transmembrane segment spans residues 305–325; sequence VLLADLYVIIPATLNPIIYGM. Over 326-350 the chain is Cytoplasmic; the sequence is RTKQLRERIWSYLMHVLFDHSNLGS.

It belongs to the G-protein coupled receptor 1 family.

The protein localises to the cell membrane. Odorant receptor. In Homo sapiens (Human), this protein is Olfactory receptor 52I2 (OR52I2).